Reading from the N-terminus, the 290-residue chain is ATP synthase gamma chain (290 aa).

Belongs to the ATPase gamma chain family. As to quaternary structure, F-type ATPases have 2 components, CF(1) - the catalytic core - and CF(0) - the membrane proton channel. CF(1) has five subunits: alpha(3), beta(3), gamma(1), delta(1), epsilon(1). CF(0) has three main subunits: a, b and c.

Its subcellular location is the cell membrane. Functionally, produces ATP from ADP in the presence of a proton gradient across the membrane. The gamma chain is believed to be important in regulating ATPase activity and the flow of protons through the CF(0) complex. This is ATP synthase gamma chain from Wolbachia sp. subsp. Brugia malayi (strain TRS).